Here is a 269-residue protein sequence, read N- to C-terminus: Protein LNK3 (269 aa).

Interacts with REV8.

Its function is as follows. Probable transcriptional coactivator. The sequence is that of Protein LNK3 from Arabidopsis thaliana (Mouse-ear cress).